Consider the following 29-residue polypeptide: Cytolysin Oshem 1 (29 aa).

Its subcellular location is the secreted. The protein resides in the nematocyst. It localises to the target cell membrane. In terms of biological role, cytolysin that shows moderate hemolysis and moderate myonecrosis. This Olindias sambaquiensis (Hydromedusa) protein is Cytolysin Oshem 1.